The chain runs to 564 residues: M protein, serotype 12 (564 aa).

The signal sequence occupies residues 1 to 41 (MAKNTTNRHYSLRKLKTGTASVAVALTVVGAGLVAGQTVRA). Residues 44–505 (SDLVAEKQRL…RAGKASDSQT (462 aa)) adopt a coiled-coil conformation. C repeat units lie at residues 285 to 319 (KQLE…EAEL), 327 to 361 (AKVT…VEAA), 363 to 397 (KQLE…EKDL), and 405 to 439 (DKVK…EKAL). 2 disordered regions span residues 372–391 (SEAS…EAKK) and 404–438 (LDKV…VEKA). Basic and acidic residues-rich tracts occupy residues 404–413 (LDKVKEEKQI) and 421–438 (LRRD…VEKA). D repeat units follow at residues 472 to 477 (AKLEAE), 478 to 483 (AKALKE), 486 to 491 (AKQAEE), and 493 to 498 (AKLRAG). Residues 493 to 550 (AKLRAGKASDSQTPDAKPGNKAVPGKGQAPQAGTKPNQNKAPMKETKRQLPSTGETAN) are disordered. The LPXTG sorting signal signature appears at 542 to 546 (LPSTG). Pentaglycyl murein peptidoglycan amidated threonine is present on T545. Residues 546–564 (GETANPFFTAAALTVMAAA) constitute a propeptide, removed by sortase.

It belongs to the M protein family.

It is found in the secreted. It localises to the cell wall. In terms of biological role, this protein is one of the different antigenic serotypes of protein M. Protein M is closely associated with virulence of the bacterium and can render the organism resistant to phagocytosis. This is M protein, serotype 12 (emm12) from Streptococcus pyogenes.